The chain runs to 214 residues: MKLNIAILLAALAATASASPAGDISEVAVDADASELLVDPRAELPVAPRASFFIDARQDTNGTSQDEIDQWLTAHNDERAQHGPVPLVWNQDLQNAAMSWASRCVYKHNRGGQNIAARYNTRANFPREIDRAVGQWNNERGEYNATTFKGAGHWTQVVWKHSRNLGCAAYSCPQGTLGKKPGDKWKSLWYYVCNYDPKGNVVPASKYYPSNVQP.

The first 18 residues, methionine 1–alanine 18, serve as a signal peptide directing secretion. N-linked (GlcNAc...) asparagine glycosylation is found at asparagine 61 and asparagine 144. In terms of domain architecture, SCP spans leucine 72–tyrosine 195.

It belongs to the CRISP family.

Its subcellular location is the secreted. In Schizophyllum commune (Split gill fungus), this protein is Fruiting body protein SC14 (SC14).